The chain runs to 466 residues: NADH-quinone oxidoreductase subunit N (466 aa).

14 consecutive transmembrane segments (helical) span residues 9 to 29 (LIPLLILACGSVFVLMLGAIV), 33 to 53 (CGTVIGVAVCAGTALWAMLAP), 68 to 88 (PFTRFFLVFFAVTAGLSLLLA), 100 to 120 (EEYPATILFGTFGMGVVASAA), 122 to 142 (FLTLFLGLEALTFAFYILVAY), 157 to 177 (LLMGAVSAAFVAFGIALLYGA), 190 to 210 (SAAGGGIALAGWGLLLAGLAF), 232 to 252 (VVAFLASGSKGAAIALFLLIL), 263 to 283 (APLWGLAFLSMTVGNLAALLQ), 289 to 309 (MLAYSSVAQMGYVALALLSGG), 314 to 334 (AAAFYAVAYGAMVLAAFGALA), 359 to 379 (GVVLAVAMLALAGIPPTVGFV), 394 to 416 (APLAVIGILTAAASAYYYLRVVV), and 438 to 458 (LSLGIAALAIFILGIWPGPLF).

The protein belongs to the complex I subunit 2 family. As to quaternary structure, NDH-1 is composed of 14 different subunits. Subunits NuoA, H, J, K, L, M, N constitute the membrane sector of the complex.

The protein resides in the cell inner membrane. It carries out the reaction a quinone + NADH + 5 H(+)(in) = a quinol + NAD(+) + 4 H(+)(out). NDH-1 shuttles electrons from NADH, via FMN and iron-sulfur (Fe-S) centers, to quinones in the respiratory chain. The immediate electron acceptor for the enzyme in this species is believed to be ubiquinone. Couples the redox reaction to proton translocation (for every two electrons transferred, four hydrogen ions are translocated across the cytoplasmic membrane), and thus conserves the redox energy in a proton gradient. This is NADH-quinone oxidoreductase subunit N from Geobacter metallireducens (strain ATCC 53774 / DSM 7210 / GS-15).